The chain runs to 101 residues: NAD(P)H-quinone oxidoreductase subunit 4L, chloroplastic (101 aa).

A run of 3 helical transmembrane segments spans residues 2–22, 32–52, and 61–81; these read MLEH…YGLI, MCLE…SDLF, and VFSI…PAIV.

This sequence belongs to the complex I subunit 4L family. In terms of assembly, NDH is composed of at least 16 different subunits, 5 of which are encoded in the nucleus.

Its subcellular location is the plastid. It localises to the chloroplast thylakoid membrane. The catalysed reaction is a plastoquinone + NADH + (n+1) H(+)(in) = a plastoquinol + NAD(+) + n H(+)(out). The enzyme catalyses a plastoquinone + NADPH + (n+1) H(+)(in) = a plastoquinol + NADP(+) + n H(+)(out). Its function is as follows. NDH shuttles electrons from NAD(P)H:plastoquinone, via FMN and iron-sulfur (Fe-S) centers, to quinones in the photosynthetic chain and possibly in a chloroplast respiratory chain. The immediate electron acceptor for the enzyme in this species is believed to be plastoquinone. Couples the redox reaction to proton translocation, and thus conserves the redox energy in a proton gradient. This is NAD(P)H-quinone oxidoreductase subunit 4L, chloroplastic from Nuphar advena (Common spatterdock).